The primary structure comprises 499 residues: Aldehyde dehydrogenase 1 (499 aa).

Residues isoleucine 164–tryptophan 166, isoleucine 164–asparagine 167, lysine 190–glutamate 193, glycine 223–serine 224, glycine 243–serine 244, glycine 243–glycine 248, and glutamate 266–glycine 268 each bind NAD(+). Residue glutamate 266 is the Proton acceptor of the active site. Cysteine 300 (nucleophile) is an active-site residue. Residues glutamine 346–lysine 350 and glutamate 397–phenylalanine 399 each bind NAD(+).

This sequence belongs to the aldehyde dehydrogenase family. Homotetramer. As to expression, expressed in flowers and disk florets.

It carries out the reaction an aldehyde + NAD(+) + H2O = a carboxylate + NADH + 2 H(+). The catalysed reaction is an aldehyde + NADP(+) + H2O = a carboxylate + NADPH + 2 H(+). The enzyme catalyses octanal + NADP(+) + H2O = octanoate + NADPH + 2 H(+). It catalyses the reaction (1R,3R)-chrysanthemal + NAD(+) + H2O = (1R,3R)-chrysanthemate + NADH + 2 H(+). It carries out the reaction (1R,3R)-chrysanthemal + NADP(+) + H2O = (1R,3R)-chrysanthemate + NADPH + 2 H(+). The catalysed reaction is (E)-hept-2-enal + NADP(+) + H2O = (E)-hept-2-enoate + NADPH + 2 H(+). The enzyme catalyses dodecanal + NADP(+) + H2O = dodecanoate + NADPH + 2 H(+). It catalyses the reaction citral + NADP(+) + H2O = 3,7-dimethylocta-2,6-dienoate + NADPH + 2 H(+). It carries out the reaction perillyl aldehyde + NADP(+) + H2O = perillate + NADPH + 2 H(+). The catalysed reaction is (2E,6E)-farnesal + NADP(+) + H2O = (2E,6E)-farnesoate + NADPH + 2 H(+). The enzyme catalyses (S)-(-)-citronellal + NADP(+) + H2O = (S)-(-)-citronellate + NADPH + 2 H(+). It functions in the pathway isoprenoid biosynthesis. Functionally, component of the monoterpenoid pyrethrins biosynthesis; pyrethrins are widely used plant-derived pesticide. Mediates the conversion of trans-chrysanthemal into trans-chrysanthemic acid. Can also use octanal, hept-2-enal, dodecanal, citral, farnesal, citronellal and perillyl aldehyde as substrates. This Tanacetum cinerariifolium (Dalmatian daisy) protein is Aldehyde dehydrogenase 1.